A 311-amino-acid chain; its full sequence is Immune-associated nucleotide-binding protein 7 (311 aa).

Positions lysine 14–lysine 222 constitute an AIG1-type G domain. The interval glycine 23–serine 30 is G1. GTP contacts are provided by residues glycine 23–alanine 31 and serine 44. The tract at residues glycine 50 to lysine 54 is G2. The tract at residues aspartate 72–glycine 75 is G3. Positions threonine 142–aspartate 145 are G4. Residues aspartate 181–lysine 183 are G5. Position 182 (asparagine 182) interacts with GTP. The stretch at tyrosine 218–alanine 295 forms a coiled coil.

The protein belongs to the TRAFAC class TrmE-Era-EngA-EngB-Septin-like GTPase superfamily. AIG1/Toc34/Toc159-like paraseptin GTPase family. IAN subfamily. Ubiquitous.

This Arabidopsis thaliana (Mouse-ear cress) protein is Immune-associated nucleotide-binding protein 7.